Here is a 361-residue protein sequence, read N- to C-terminus: ATP-dependent 6-phosphofructokinase 1 (361 aa).

ATP-binding positions include G14, 79-80, and 116-119; these read KG and GDGS. D117 provides a ligand contact to Mg(2+). Substrate contacts are provided by residues 140–142, R177, 184–186, E237, R278, and 284–287; these read TID, MGR, and HIQR. D142 (proton acceptor) is an active-site residue.

This sequence belongs to the phosphofructokinase type A (PFKA) family. Mixed-substrate PFK group III subfamily. As to quaternary structure, homodimer or homotetramer. The cofactor is Mg(2+).

It is found in the cytoplasm. The catalysed reaction is beta-D-fructose 6-phosphate + ATP = beta-D-fructose 1,6-bisphosphate + ADP + H(+). It functions in the pathway carbohydrate degradation; glycolysis; D-glyceraldehyde 3-phosphate and glycerone phosphate from D-glucose: step 3/4. Catalyzes the phosphorylation of D-fructose 6-phosphate to fructose 1,6-bisphosphate by ATP, the first committing step of glycolysis. This chain is ATP-dependent 6-phosphofructokinase 1, found in Synechocystis sp. (strain ATCC 27184 / PCC 6803 / Kazusa).